A 312-amino-acid polypeptide reads, in one-letter code: MELQFLGTGAGQPSKQRNVSSVALKLLDELNEIWLFDVGEATQHQILRTNIRLRKVTKIFISHNHGDHIFGLPGLLSTRSFQGDVGPLTIYGPPGIEQFVKVSLKVSRTKVSYPIKFVELTKPGLICEDKGFRVYTDRLDHRIPSFGFRVVEDSHPGELLIDKLAKYNIPNGPLLGQLKRGDQVTLADGTVLNGKDFLGAEKPGRIVTIIYDTRSTPSIARLAKDADVLVHESTFAGDEAKMAHNYYHSTSVQAAKIAKQENVKKLCLSHISARYMGNKAKKLESQAKKVFPNTILVNDFDQINIPMKGSEK.

His63, His65, Asp67, His68, His141, Asp212, and His270 together coordinate Zn(2+). Asp67 acts as the Proton acceptor in catalysis.

Belongs to the RNase Z family. As to quaternary structure, homodimer. The cofactor is Zn(2+).

It carries out the reaction Endonucleolytic cleavage of RNA, removing extra 3' nucleotides from tRNA precursor, generating 3' termini of tRNAs. A 3'-hydroxy group is left at the tRNA terminus and a 5'-phosphoryl group is left at the trailer molecule.. Zinc phosphodiesterase, which displays some tRNA 3'-processing endonuclease activity. Probably involved in tRNA maturation, by removing a 3'-trailer from precursor tRNA. The sequence is that of Ribonuclease Z from Lactobacillus helveticus (strain DPC 4571).